A 252-amino-acid polypeptide reads, in one-letter code: Putative teichuronic acid biosynthesis glycosyltransferase TuaG (252 aa).

The protein belongs to the glycosyltransferase 2 family.

It functions in the pathway cell wall biogenesis; teichuronic acid biosynthesis. This Bacillus subtilis (strain 168) protein is Putative teichuronic acid biosynthesis glycosyltransferase TuaG (tuaG).